We begin with the raw amino-acid sequence, 167 residues long: Leptin (167 aa).

An N-terminal signal peptide occupies residues 1-21 (MRCGPLYRFLWLWPYLSYVEA). An intrachain disulfide couples cysteine 117 to cysteine 167.

Belongs to the leptin family.

It is found in the secreted. Functionally, key player in the regulation of energy balance and body weight control. Once released into the circulation, has central and peripheral effects by binding LEPR, found in many tissues, which results in the activation of several major signaling pathways. In the hypothalamus, acts as an appetite-regulating factor that induces a decrease in food intake and an increase in energy consumption by inducing anorexinogenic factors and suppressing orexigenic neuropeptides, also regulates bone mass and secretion of hypothalamo-pituitary-adrenal hormones. In the periphery, increases basal metabolism, influences reproductive function, regulates pancreatic beta-cell function and insulin secretion, is pro-angiogenic for endothelial cell and affects innate and adaptive immunity. In the arcuate nucleus of the hypothalamus, activates by depolarization POMC neurons inducing FOS and SOCS3 expression to release anorexigenic peptides and inhibits by hyperpolarization NPY neurons inducing SOCS3 with a consequent reduction on release of orexigenic peptides. In addition to its known satiety inducing effect, has a modulatory role in nutrient absorption. In the intestine, reduces glucose absorption by enterocytes by activating PKC and leading to a sequential activation of p38, PI3K and ERK signaling pathways which exerts an inhibitory effect on glucose absorption. Acts as a growth factor on certain tissues, through the activation of different signaling pathways increases expression of genes involved in cell cycle regulation such as CCND1, via JAK2-STAT3 pathway, or VEGFA, via MAPK1/3 and PI3K-AKT1 pathways. May also play an apoptotic role via JAK2-STAT3 pathway and up-regulation of BIRC5 expression. Pro-angiogenic, has mitogenic activity on vascular endothelial cells and plays a role in matrix remodeling by regulating the expression of matrix metalloproteinases (MMPs) and tissue inhibitors of metalloproteinases (TIMPs). In innate immunity, modulates the activity and function of neutrophils by increasing chemotaxis and the secretion of oxygen radicals. Increases phagocytosis by macrophages and enhances secretion of pro-inflammatory mediators. Increases cytotoxic ability of NK cells. Plays a pro-inflammatory role, in synergy with IL1B, by inducing NOS2 which promotes the production of IL6, IL8 and Prostaglandin E2, through a signaling pathway that involves JAK2, PI3K, MAP2K1/MEK1 and MAPK14/p38. In adaptive immunity, promotes the switch of memory T-cells towards T helper-1 cell immune responses. Increases CD4(+)CD25(-) T-cell proliferation and reduces autophagy during TCR (T-cell receptor) stimulation, through MTOR signaling pathway activation and BCL2 up-regulation. The polypeptide is Leptin (LEP) (Capra hircus (Goat)).